The chain runs to 309 residues: Homoserine kinase (309 aa).

91–101 contributes to the ATP binding site; that stretch reads PIGSGLGSSAC.

The protein belongs to the GHMP kinase family. Homoserine kinase subfamily.

It is found in the cytoplasm. It carries out the reaction L-homoserine + ATP = O-phospho-L-homoserine + ADP + H(+). It functions in the pathway amino-acid biosynthesis; L-threonine biosynthesis; L-threonine from L-aspartate: step 4/5. Catalyzes the ATP-dependent phosphorylation of L-homoserine to L-homoserine phosphate. The polypeptide is Homoserine kinase (Buchnera aphidicola subsp. Schizaphis graminum (strain Sg)).